The chain runs to 485 residues: MSLFDHSVSELHTLLKKKEVSISDLVDESYRRIDEVEEKVQAFLTLNEEQARAKAKELDNQLAKGEETNPLFGLPIGIKDNIVTKGLRTTCASKILYNFDPIYDATVMERLNAAGTITIGKLNMDEFAMGSSTENSGFQLTRNPWDLERVPGGSSGGSAAAVAAGEVPFALGSDTGGSIRQPAAFCGVVGLKPTYGRVSRFGLVAFASSLDQIGPITRTVEDNAYVLQAIAGVDPMDSTSANIPVPNYVEALTGDIKGLKIAVPKEYLGEGVDEGVRQSVLAALAVLEKLGAAWEEVSLPHSKYALATYYLLASSEASANLARFDGVRYGYRTDNAKNLIDMYKLTRSEGFGAEVKRRIMLGTFALSSGYYDAYYKKAQKVRTLIKRDFENVFERYDVIIGPTTPTPAFKIGEKTSDPLTMYMNDILTIPVNLAGVPAISVPCGFVDGLPVGLQIIGKHFDESTVYRVAHAFEQATDYHKQKPVL.

Catalysis depends on charge relay system residues K79 and S154. The active-site Acyl-ester intermediate is S178.

This sequence belongs to the amidase family. GatA subfamily. As to quaternary structure, heterotrimer of A, B and C subunits.

The enzyme catalyses L-glutamyl-tRNA(Gln) + L-glutamine + ATP + H2O = L-glutaminyl-tRNA(Gln) + L-glutamate + ADP + phosphate + H(+). In terms of biological role, allows the formation of correctly charged Gln-tRNA(Gln) through the transamidation of misacylated Glu-tRNA(Gln) in organisms which lack glutaminyl-tRNA synthetase. The reaction takes place in the presence of glutamine and ATP through an activated gamma-phospho-Glu-tRNA(Gln). This is Glutamyl-tRNA(Gln) amidotransferase subunit A from Geobacillus kaustophilus (strain HTA426).